A 92-amino-acid polypeptide reads, in one-letter code: Small ribosomal subunit protein uS19 (92 aa).

This sequence belongs to the universal ribosomal protein uS19 family.

Its function is as follows. Protein S19 forms a complex with S13 that binds strongly to the 16S ribosomal RNA. This is Small ribosomal subunit protein uS19 from Corynebacterium urealyticum (strain ATCC 43042 / DSM 7109).